The sequence spans 463 residues: Sugar transporter ERD6-like 7 (463 aa).

12 helical membrane passes run 26–46, 69–89, 103–123, 126–146, 157–177, 181–201, 264–284, 299–319, 327–347, 357–377, 396–416, and 426–446; these read WMVY…GSCA, LFGS…GPIA, AFCV…ALDL, LATG…IAEI, TLNQ…GTLV, VLAL…FFIP, VLIA…GICF, LGMI…APIV, LLLV…VSFY, AVPV…SAGM, VAGG…SYTF, and GTFL…IAIV.

It belongs to the major facilitator superfamily. Sugar transporter (TC 2.A.1.1) family.

The protein resides in the membrane. Functionally, sugar transporter. The polypeptide is Sugar transporter ERD6-like 7 (Arabidopsis thaliana (Mouse-ear cress)).